The following is a 259-amino-acid chain: Global transcriptional regulator CodY (259 aa).

The tract at residues 1–155 (MNLLEKTRKI…GATVVGMEIL (155 aa)) is GAF domain. A DNA-binding region (H-T-H motif) is located at residues 203–222 (ASKIADRVGITRSVIVNALR). S215 is modified (phosphoserine).

The protein belongs to the CodY family.

It localises to the cytoplasm. Its function is as follows. DNA-binding global transcriptional regulator which is involved in the adaptive response to starvation and acts by directly or indirectly controlling the expression of numerous genes in response to nutrient availability. During rapid exponential growth, CodY is highly active and represses genes whose products allow adaptation to nutrient depletion. The polypeptide is Global transcriptional regulator CodY (Geobacillus thermodenitrificans (strain NG80-2)).